The following is a 426-amino-acid chain: Glutamate-1-semialdehyde 2,1-aminomutase (426 aa).

Lys265 carries the post-translational modification N6-(pyridoxal phosphate)lysine.

The protein belongs to the class-III pyridoxal-phosphate-dependent aminotransferase family. HemL subfamily. Homodimer. The cofactor is pyridoxal 5'-phosphate.

The protein localises to the cytoplasm. It carries out the reaction (S)-4-amino-5-oxopentanoate = 5-aminolevulinate. It participates in porphyrin-containing compound metabolism; protoporphyrin-IX biosynthesis; 5-aminolevulinate from L-glutamyl-tRNA(Glu): step 2/2. In Hahella chejuensis (strain KCTC 2396), this protein is Glutamate-1-semialdehyde 2,1-aminomutase.